A 283-amino-acid polypeptide reads, in one-letter code: Pantothenate synthetase (283 aa).

Residue 30–37 (MGNLHAGH) participates in ATP binding. Histidine 37 acts as the Proton donor in catalysis. Glutamine 61 contacts (R)-pantoate. Position 61 (glutamine 61) interacts with beta-alanine. Residue 149–152 (GQKD) coordinates ATP. Residue glutamine 155 participates in (R)-pantoate binding. Residues valine 178 and 186-189 (LSSR) contribute to the ATP site.

It belongs to the pantothenate synthetase family. In terms of assembly, homodimer.

It localises to the cytoplasm. It catalyses the reaction (R)-pantoate + beta-alanine + ATP = (R)-pantothenate + AMP + diphosphate + H(+). It participates in cofactor biosynthesis; (R)-pantothenate biosynthesis; (R)-pantothenate from (R)-pantoate and beta-alanine: step 1/1. In terms of biological role, catalyzes the condensation of pantoate with beta-alanine in an ATP-dependent reaction via a pantoyl-adenylate intermediate. This Hydrogenovibrio crunogenus (strain DSM 25203 / XCL-2) (Thiomicrospira crunogena) protein is Pantothenate synthetase.